Consider the following 217-residue polypeptide: Uracil-DNA glycosylase (217 aa).

Aspartate 62 (proton acceptor) is an active-site residue.

It belongs to the uracil-DNA glycosylase (UDG) superfamily. UNG family.

Its subcellular location is the cytoplasm. It carries out the reaction Hydrolyzes single-stranded DNA or mismatched double-stranded DNA and polynucleotides, releasing free uracil.. Its function is as follows. Excises uracil residues from the DNA which can arise as a result of misincorporation of dUMP residues by DNA polymerase or due to deamination of cytosine. This Streptococcus pyogenes serotype M18 (strain MGAS8232) protein is Uracil-DNA glycosylase.